The following is a 338-amino-acid chain: Glycerol-3-phosphate dehydrogenase [NAD(P)+] (338 aa).

NADPH contacts are provided by S12, W13, K34, and K110. Sn-glycerol 3-phosphate is bound by residues K110, G141, and S143. A145 is an NADPH binding site. Positions 196, 249, 259, 260, and 261 each coordinate sn-glycerol 3-phosphate. K196 acts as the Proton acceptor in catalysis. R260 is a binding site for NADPH. V284 and E286 together coordinate NADPH.

The protein belongs to the NAD-dependent glycerol-3-phosphate dehydrogenase family.

It localises to the cytoplasm. The catalysed reaction is sn-glycerol 3-phosphate + NAD(+) = dihydroxyacetone phosphate + NADH + H(+). It catalyses the reaction sn-glycerol 3-phosphate + NADP(+) = dihydroxyacetone phosphate + NADPH + H(+). It functions in the pathway membrane lipid metabolism; glycerophospholipid metabolism. In terms of biological role, catalyzes the reduction of the glycolytic intermediate dihydroxyacetone phosphate (DHAP) to sn-glycerol 3-phosphate (G3P), the key precursor for phospholipid synthesis. The polypeptide is Glycerol-3-phosphate dehydrogenase [NAD(P)+] (Ligilactobacillus salivarius (strain UCC118) (Lactobacillus salivarius)).